The chain runs to 201 residues: Small ribosomal subunit protein uS4 (201 aa).

Positions 26 to 45 (FEKRNYPPGQHGNNRRRGKK) are disordered. The S4 RNA-binding domain maps to 93–153 (SRLDNVVYRM…EKSKSLAVVQ (61 aa)).

The protein belongs to the universal ribosomal protein uS4 family. As to quaternary structure, part of the 30S ribosomal subunit. Contacts protein S5. The interaction surface between S4 and S5 is involved in control of translational fidelity.

In terms of biological role, one of the primary rRNA binding proteins, it binds directly to 16S rRNA where it nucleates assembly of the body of the 30S subunit. Functionally, with S5 and S12 plays an important role in translational accuracy. In Christiangramia forsetii (strain DSM 17595 / CGMCC 1.15422 / KT0803) (Gramella forsetii), this protein is Small ribosomal subunit protein uS4.